We begin with the raw amino-acid sequence, 305 residues long: Porphobilinogen deaminase (305 aa).

C238 carries the S-(dipyrrolylmethanemethyl)cysteine modification.

The protein belongs to the HMBS family. As to quaternary structure, monomer. Dipyrromethane serves as cofactor.

The catalysed reaction is 4 porphobilinogen + H2O = hydroxymethylbilane + 4 NH4(+). The protein operates within porphyrin-containing compound metabolism; protoporphyrin-IX biosynthesis; coproporphyrinogen-III from 5-aminolevulinate: step 2/4. Functionally, tetrapolymerization of the monopyrrole PBG into the hydroxymethylbilane pre-uroporphyrinogen in several discrete steps. The polypeptide is Porphobilinogen deaminase (Rubrobacter xylanophilus (strain DSM 9941 / JCM 11954 / NBRC 16129 / PRD-1)).